Reading from the N-terminus, the 198-residue chain is Protein GrpE (198 aa).

This sequence belongs to the GrpE family. As to quaternary structure, homodimer.

Its subcellular location is the cytoplasm. In terms of biological role, participates actively in the response to hyperosmotic and heat shock by preventing the aggregation of stress-denatured proteins, in association with DnaK and GrpE. It is the nucleotide exchange factor for DnaK and may function as a thermosensor. Unfolded proteins bind initially to DnaJ; upon interaction with the DnaJ-bound protein, DnaK hydrolyzes its bound ATP, resulting in the formation of a stable complex. GrpE releases ADP from DnaK; ATP binding to DnaK triggers the release of the substrate protein, thus completing the reaction cycle. Several rounds of ATP-dependent interactions between DnaJ, DnaK and GrpE are required for fully efficient folding. This Baumannia cicadellinicola subsp. Homalodisca coagulata protein is Protein GrpE.